A 468-amino-acid polypeptide reads, in one-letter code: Two-component response regulator-like APRR9 (468 aa).

In terms of domain architecture, Response regulatory spans 38–156 (RVLLVESDYS…ELKNLWQHVW (119 aa)). Polar residues-rich tracts occupy residues 168-177 (HAQSLPASQH) and 194-203 (DQGSGAQAIN). Disordered regions lie at residues 168-203 (HAQS…QAIN), 302-416 (VVAL…SRSQ), and 442-468 (RKKL…STKS). Over residues 315–327 (TPTESHEKLRKVT) the composition is skewed to basic and acidic residues. Positions 328–364 (SDQGSATTSSNQENIGSSSVSFRNQVLQSTVTNQKQD) are enriched in polar residues. 2 stretches are compositionally biased toward basic and acidic residues: residues 371 to 382 (SNREKAASKEVE) and 400 to 409 (EKPKEEESAK). In terms of domain architecture, CCT spans 417 to 459 (REAALMKFRLKRKDRCFDKKVRYQSRKKLAEQRPRVKGQFVRT). Over residues 458-468 (RTVNSDASTKS) the composition is skewed to polar residues.

Belongs to the ARR-like family. Post-translationally, phosphorylated. Phosphorylation varies throughout the diurnal cycle.

The protein localises to the nucleus. Transcriptional repressor of CCA1 and LHY, and positive regulator of LWD1 and LWD2 expression. Controls photoperiodic flowering response and temperature compensation. Involved in the positive and negative feedback loops of the circadian clock. Expression of several members of the ARR-like family is controlled by circadian rhythm. Regulated at the transcriptional level by a corepressor complex consisting of ELF4, ELF3, and LUX. APRR9, APRR7, and APRR5 coordinately act on the upstream region of the target genes to repress their expression from noon until midnight. The particular coordinated sequential expression of APRR9, APRR7, APRR5, APRR3 and APPR1 result to circadian waves that may be at the basis of the endogenous circadian clock. The polypeptide is Two-component response regulator-like APRR9 (APRR9) (Arabidopsis thaliana (Mouse-ear cress)).